Consider the following 477-residue polypeptide: MSPQTETKASVGFKAGVKEYKLTYYTPEYQTKDTDILAAFRVTPQPGVPPEEAGAAVAAESSTGTWTTVWTDGLTSLDRYKGRCYRIERVVGEKDQYIAYVAYPLDLFEEGSVTNMFTSIVGNVFGFKALRALRLEDLRIPPAYVKTFQGPPHGIQVERDKLNKYGRPLLGCTIKPKLGLSAKNYGRAVYECLRGGLDFTKDDENVNSQPFMRWRDRFLFCAEALFKAQTETGEIKGHYLNATAGTCEEMIKRAVFARELGVPIVMHDYLTGGFTANTTLAHYCRDNGLLLHIHRAMHAVIDRQKNHGIHFRVLAKALRMSGGDHIHSGTVVGKLEGERDITLGFVDLLRDDFVEQDRSRGIYFTQDWVSLPGVLPVASGGIHVWHMPALTEIFGDDSVLQFGGGTLGHPWGNAPGAVANRVALEACVKARNEGRDLAREGNEIIREACKWSPELAAACEVWKEIVFNFAAVDVLDK.

Residues 1 to 2 (MS) constitute a propeptide that is removed on maturation. Residue Pro3 is modified to N-acetylproline. Lys14 bears the N6,N6,N6-trimethyllysine mark. The substrate site is built by Asn123 and Thr173. Lys175 (proton acceptor) is an active-site residue. Lys177 is a substrate binding site. Residues Lys201, Asp203, and Glu204 each contribute to the Mg(2+) site. Lys201 is subject to N6-carboxylysine. Residue His294 is the Proton acceptor of the active site. Substrate-binding residues include Arg295, His327, and Ser379.

Belongs to the RuBisCO large chain family. Type I subfamily. As to quaternary structure, heterohexadecamer of 8 large chains and 8 small chains; disulfide-linked. The disulfide link is formed within the large subunit homodimers. Mg(2+) serves as cofactor. The disulfide bond which can form in the large chain dimeric partners within the hexadecamer appears to be associated with oxidative stress and protein turnover.

It is found in the plastid. Its subcellular location is the chloroplast. It catalyses the reaction 2 (2R)-3-phosphoglycerate + 2 H(+) = D-ribulose 1,5-bisphosphate + CO2 + H2O. The enzyme catalyses D-ribulose 1,5-bisphosphate + O2 = 2-phosphoglycolate + (2R)-3-phosphoglycerate + 2 H(+). Functionally, ruBisCO catalyzes two reactions: the carboxylation of D-ribulose 1,5-bisphosphate, the primary event in carbon dioxide fixation, as well as the oxidative fragmentation of the pentose substrate in the photorespiration process. Both reactions occur simultaneously and in competition at the same active site. In Solanum lycopersicum (Tomato), this protein is Ribulose bisphosphate carboxylase large chain (rbcL).